Consider the following 107-residue polypeptide: Sulfurtransferase Alvin_2599 (107 aa).

In terms of domain architecture, Rhodanese spans 16 to 104 (DTEDVLLVDI…WARHGLPIVA (89 aa)). Cysteine 64 serves as the catalytic Cysteine persulfide intermediate.

As to quaternary structure, monomer.

The protein resides in the cytoplasm. The protein operates within energy metabolism; sulfur metabolism. Functionally, sulfur carrier protein involved in sulfur trafficking for oxidative dissimilatory sulfur metabolism. Component of a sulfur relay system that starts with the sulfur-mobilizing rhodanese-like protein Rhd_2599 (Alvin_2599), which transfers the sulfur from a low-molecular-weight thiol, maybe glutathione, to the TusA protein (Alvin_2600); TusA serves as the sulfur donor for DsrEFH, which persulfurates DsrC; persulfurated DsrC very probably serves as a direct substrate for reverse-acting sulfite reductase, DsrAB. Is able to catalyze the sulfur transfer reaction from thiosulfate or glutathione (GSSH) to cyanide in vitro, however, thiosulfate is unlikely an in vivo substrate. The chain is Sulfurtransferase Alvin_2599 from Allochromatium vinosum (strain ATCC 17899 / DSM 180 / NBRC 103801 / NCIMB 10441 / D) (Chromatium vinosum).